A 75-amino-acid polypeptide reads, in one-letter code: MSKQDLIEMEGTVMESLPNAMFRVDLDNGFNVLAHISGKIRRNYIKILPGDRVKVELTPYDLTKGRITYRLKNKK.

One can recognise an S1-like domain in the interval 1-72; the sequence is MSKQDLIEME…TKGRITYRLK (72 aa).

Belongs to the IF-1 family. In terms of assembly, component of the 30S ribosomal translation pre-initiation complex which assembles on the 30S ribosome in the order IF-2 and IF-3, IF-1 and N-formylmethionyl-tRNA(fMet); mRNA recruitment can occur at any time during PIC assembly.

The protein resides in the cytoplasm. Functionally, one of the essential components for the initiation of protein synthesis. Stabilizes the binding of IF-2 and IF-3 on the 30S subunit to which N-formylmethionyl-tRNA(fMet) subsequently binds. Helps modulate mRNA selection, yielding the 30S pre-initiation complex (PIC). Upon addition of the 50S ribosomal subunit IF-1, IF-2 and IF-3 are released leaving the mature 70S translation initiation complex. The protein is Translation initiation factor IF-1 of Synechocystis sp. (strain ATCC 27184 / PCC 6803 / Kazusa).